The sequence spans 284 residues: MTAQLIDGKAIAANLRQQIAQRVTERRQQGLRVPGLAVILVGTDPASQVYVAHKRKDCEEVGFLSQAYDLPADTSQDELLALIDRLNDDPAIDGILVQLPLPAHLDASLLLERIHPDKDVDGFHPYNIGRLAQRMPLLRPCTPKGIMTLLASTGADLYGMDAVVVGASNIVGRPMALELLLGGCTVTVTHRFTRDLAAHVSRADLVVVAAGKPGLVKGEWIKEGAIVIDVGINRQADGRLVGDVEYDVAARRASWITPVPGGVGPMTRACLLENTLHAAEHLHD.

Residues 166–168 (GAS) and isoleucine 232 each bind NADP(+).

Belongs to the tetrahydrofolate dehydrogenase/cyclohydrolase family. As to quaternary structure, homodimer.

The enzyme catalyses (6R)-5,10-methylene-5,6,7,8-tetrahydrofolate + NADP(+) = (6R)-5,10-methenyltetrahydrofolate + NADPH. It carries out the reaction (6R)-5,10-methenyltetrahydrofolate + H2O = (6R)-10-formyltetrahydrofolate + H(+). It functions in the pathway one-carbon metabolism; tetrahydrofolate interconversion. Catalyzes the oxidation of 5,10-methylenetetrahydrofolate to 5,10-methenyltetrahydrofolate and then the hydrolysis of 5,10-methenyltetrahydrofolate to 10-formyltetrahydrofolate. This is Bifunctional protein FolD from Pseudomonas paraeruginosa (strain DSM 24068 / PA7) (Pseudomonas aeruginosa (strain PA7)).